The chain runs to 1165 residues: Leptin receptor (1165 aa).

The first 21 residues, 1–21, serve as a signal peptide directing secretion; the sequence is MICQKFCVVLLHWEFIYVITA. At 22 to 839 the chain is on the extracellular side; it reads FNLSYPITPW…QDDIEKHQSD (818 aa). Residues asparagine 23, asparagine 41, asparagine 56, asparagine 73, asparagine 81, and asparagine 98 are each glycosylated (N-linked (GlcNAc...) asparagine). Cystine bridges form between cysteine 37–cysteine 90, cysteine 89–cysteine 99, cysteine 131–cysteine 142, cysteine 186–cysteine 196, and cysteine 188–cysteine 193. N-linked (GlcNAc...) asparagine glycosylation occurs at asparagine 187. Asparagine 206, asparagine 276, asparagine 347, and asparagine 397 each carry an N-linked (GlcNAc...) asparagine glycan. In terms of domain architecture, Fibronectin type-III 1 spans 239-333; that stretch reads PPLGLHMEIT…TPRVFTTQDV (95 aa). The Ig-like domain occupies 331-429; sequence QDVIYFPPKI…HRYAELYVID (99 aa). Cystine bridges form between cysteine 352–cysteine 412, cysteine 413–cysteine 418, cysteine 436–cysteine 447, cysteine 473–cysteine 528, and cysteine 488–cysteine 498. A leptin-binding region spans residues 467–484; sequence HRSSLYCSDIPSIHPISE. N-linked (GlcNAc...) asparagine glycans are attached at residues asparagine 516, asparagine 624, asparagine 659, asparagine 688, asparagine 697, asparagine 728, and asparagine 750. 3 Fibronectin type-III domains span residues 539 to 634, 639 to 732, and 740 to 833; these read PPSS…TVVM, PMRG…LTFS, and IVQS…QDDI. Positions 622–626 match the WSXWS motif motif; sequence WSNWS. The helical transmembrane segment at 840-862 threads the bilayer; sequence AGLYVIVPVIISSSILLLGTLLI. The Cytoplasmic segment spans residues 863-1165; the sequence is SHQRMKKLFW…MENKMCDLTV (303 aa). Residues 871 to 879 carry the Box 1 motif motif; sequence FWEDVPNPK. Serine 882 carries the post-translational modification Phosphoserine. Residues 893 to 898 are required for JAK2 activation; sequence ETFEHL. The interval 898–906 is required for STAT3 phosphorylation; it reads LFIKHTASV. Tyrosine 986 carries the post-translational modification Phosphotyrosine; by JAK2. Tyrosine 1079 is modified (phosphotyrosine). At tyrosine 1141 the chain carries Phosphotyrosine; by JAK2.

This sequence belongs to the type I cytokine receptor family. Type 2 subfamily. In terms of assembly, present as a mixture of monomers and dimers. The phosphorylated receptor binds a number of SH2 domain-containing proteins such as JAK2, STAT3, PTPN11, and SOCS3. Interaction with SOCS3 inhibits JAK/STAT signaling and MAPK cascade. On ligand binding, phosphorylated on two conserved C-terminal tyrosine residues (isoform B only) by JAK2. Tyr-986 is required for complete binding and activation of PTPN11, ERK/FOS activation,for interaction with SOCS3 and SOCS3 mediated inhibition of leptin signaling. Phosphorylation on Tyr-1141 is required for STAT3 binding/activation. Phosphorylation of Tyr-1079 has a more accessory role. Isoform A is expressed in fetal liver and in hematopoietic tissues and choroid plexus. In adults highest expression in heart, liver, small intestine, prostate and ovary. Low level in lung and kidney. Isoform B is highly expressed in hypothalamus, but also in skeletal muscle. Detected in fundic and antral epithelial cells of the gastric mucosa. Isoform B and isoform A are expressed by NK cells (at protein level).

The protein resides in the cell membrane. It localises to the basolateral cell membrane. Its subcellular location is the secreted. Its function is as follows. Receptor for hormone LEP/leptin. On ligand binding, mediates LEP central and peripheral effects through the activation of different signaling pathways such as JAK2/STAT3 and MAPK cascade/FOS. In the hypothalamus, LEP acts as an appetite-regulating factor that induces a decrease in food intake and an increase in energy consumption by inducing anorexinogenic factors and suppressing orexigenic neuropeptides, also regulates bone mass and secretion of hypothalamo-pituitary-adrenal hormones. In the periphery, increases basal metabolism, influences reproductive function, regulates pancreatic beta-cell function and insulin secretion, is pro-angiogenic and affects innate and adaptive immunity. Control of energy homeostasis and melanocortin production (stimulation of POMC and full repression of AgRP transcription) is mediated by STAT3 signaling, whereas distinct signals regulate NPY and the control of fertility, growth and glucose homeostasis. Involved in the regulation of counter-regulatory response to hypoglycemia by inhibiting neurons of the parabrachial nucleus. Has a specific effect on T lymphocyte responses, differentially regulating the proliferation of naive and memory T -ells. Leptin increases Th1 and suppresses Th2 cytokine production. Functionally, may transport LEP across the blood-brain barrier. Binds LEP and mediates LEP endocytosis. Does not induce phosphorylation of and activate STAT3. Antagonizes Isoform A and isoform B-mediated LEP binding and endocytosis. The polypeptide is Leptin receptor (LEPR) (Homo sapiens (Human)).